The primary structure comprises 27 residues: Caerulein precursor fragment R2 (27 aa).

As to expression, expressed by the skin glands.

Its subcellular location is the secreted. Functionally, antimicrobial peptide. The protein is Caerulein precursor fragment R2 of Xenopus ruwenzoriensis (Uganda clawed frog).